A 266-amino-acid polypeptide reads, in one-letter code: Putative pyruvate, phosphate dikinase regulatory protein (266 aa).

147-154 contacts ADP; the sequence is GLSRTSKT.

It belongs to the pyruvate, phosphate/water dikinase regulatory protein family. PDRP subfamily.

It catalyses the reaction N(tele)-phospho-L-histidyl/L-threonyl-[pyruvate, phosphate dikinase] + ADP = N(tele)-phospho-L-histidyl/O-phospho-L-threonyl-[pyruvate, phosphate dikinase] + AMP + H(+). The enzyme catalyses N(tele)-phospho-L-histidyl/O-phospho-L-threonyl-[pyruvate, phosphate dikinase] + phosphate + H(+) = N(tele)-phospho-L-histidyl/L-threonyl-[pyruvate, phosphate dikinase] + diphosphate. In terms of biological role, bifunctional serine/threonine kinase and phosphorylase involved in the regulation of the pyruvate, phosphate dikinase (PPDK) by catalyzing its phosphorylation/dephosphorylation. This is Putative pyruvate, phosphate dikinase regulatory protein from Clostridium perfringens (strain SM101 / Type A).